A 759-amino-acid chain; its full sequence is Hormone-sensitive lipase (759 aa).

An Involved in the stabilization of the negatively charged intermediate by the formation of the oxyanion hole motif is present at residues His349–Gly351. Ser423 is an active-site residue. The segment at Gly534–Ser553 is disordered. Ser557 is subject to Phosphoserine. At Ser559 the chain carries Phosphoserine; by AMPK. Residue Thr574 is modified to Phosphothreonine. The segment at Leu583–Ser604 is disordered. The segment covering Asn585–Ser604 has biased composition (polar residues). Phosphoserine is present on residues Ser597, Ser618, Ser650, and Ser651. Catalysis depends on residues Asp694 and His724.

It belongs to the 'GDXG' lipolytic enzyme family. Monomer and homodimer. Interacts with CAVIN1 in the adipocyte cytoplasm. Interacts with PLIN5. In terms of processing, phosphorylation by AMPK reduces its translocation towards the lipid droplets.

Its subcellular location is the cell membrane. The protein resides in the membrane. It localises to the caveola. It is found in the cytoplasm. The protein localises to the cytosol. Its subcellular location is the lipid droplet. The enzyme catalyses a diacylglycerol + H2O = a monoacylglycerol + a fatty acid + H(+). It catalyses the reaction a triacylglycerol + H2O = a diacylglycerol + a fatty acid + H(+). It carries out the reaction a monoacylglycerol + H2O = glycerol + a fatty acid + H(+). The catalysed reaction is Hydrolyzes glycerol monoesters of long-chain fatty acids.. The enzyme catalyses cholesteryl (9Z-octadecenoate) + H2O = cholesterol + (9Z)-octadecenoate + H(+). It catalyses the reaction all-trans-retinyl hexadecanoate + H2O = all-trans-retinol + hexadecanoate + H(+). It carries out the reaction 1,2-di-(9Z-octadecenoyl)-glycerol + H2O = (9Z-octadecenoyl)-glycerol + (9Z)-octadecenoate + H(+). The catalysed reaction is 2-(5Z,8Z,11Z,14Z-eicosatetraenoyl)-glycerol + H2O = glycerol + (5Z,8Z,11Z,14Z)-eicosatetraenoate + H(+). The enzyme catalyses 1-(9Z-octadecenoyl)-glycerol + H2O = glycerol + (9Z)-octadecenoate + H(+). It catalyses the reaction 2-(9Z-octadecenoyl)-glycerol + H2O = glycerol + (9Z)-octadecenoate + H(+). It carries out the reaction 1-O-hexadecyl-2-acetyl-sn-glycerol + H2O = 1-O-hexadecyl-sn-glycerol + acetate + H(+). The catalysed reaction is 1,2-di-(9Z-octadecenoyl)-sn-glycerol + H2O = (9Z-octadecenoyl)-glycerol + (9Z)-octadecenoate + H(+). The enzyme catalyses 1,3-di-(9Z-octadecenoyl)-glycerol + H2O = 1-(9Z-octadecenoyl)-glycerol + (9Z)-octadecenoate + H(+). It catalyses the reaction 1,2-di-(9Z-octadecenoyl)-glycerol + (9Z)-octadecenoate + H(+) = 1,2,3-tri-(9Z-octadecenoyl)-glycerol + H2O. It carries out the reaction 2,3-di-(9Z)-octadecenoyl-sn-glycerol + H2O = 2-(9Z-octadecenoyl)-glycerol + (9Z)-octadecenoate + H(+). The catalysed reaction is 1,2,3-tri-(9Z-octadecenoyl)-glycerol + H2O = di-(9Z)-octadecenoylglycerol + (9Z)-octadecenoate + H(+). The enzyme catalyses 1,2-di-(9Z-octadecenoyl)-glycerol + H2O = 2-(9Z-octadecenoyl)-glycerol + (9Z)-octadecenoate + H(+). The protein operates within glycerolipid metabolism; triacylglycerol degradation. Lipase with broad substrate specificity, catalyzing the hydrolysis of triacylglycerols (TAGs), diacylglycerols (DAGs), monoacylglycerols (MAGs), cholesteryl esters and retinyl esters. Shows a preferential hydrolysis of DAGs over TAGs and MAGs and of the fatty acid (FA) esters at the sn-1 and sn-2 positions of the glycerol backbone in TAGs. Preferentially hydrolyzes FA esters at the sn-3 position of the glycerol backbone in DAGs. Catalyzes the hydrolysis of 2-arachidonoylglycerol, an endocannabinoid and of 2-acetyl monoalkylglycerol ether, the penultimate precursor of the pathway for de novo synthesis of platelet-activating factor. In adipose tissue and heart, it primarily hydrolyzes stored triglycerides to free fatty acids, while in steroidogenic tissues, it principally converts cholesteryl esters to free cholesterol for steroid hormone production. In Mus musculus (Mouse), this protein is Hormone-sensitive lipase (Lipe).